We begin with the raw amino-acid sequence, 394 residues long: Small ribosomal subunit protein uS2m (394 aa).

A mitochondrion-targeting transit peptide spans 1–25 (MQRHVFARNFRRLSLLRNPSLTKRF).

This sequence belongs to the universal ribosomal protein uS2 family. As to quaternary structure, component of the mitochondrial small ribosomal subunit (mt-SSU). Mature yeast 74S mitochondrial ribosomes consist of a small (37S) and a large (54S) subunit. The 37S small subunit contains a 15S ribosomal RNA (15S mt-rRNA) and 34 different proteins. The 54S large subunit contains a 21S rRNA (21S mt-rRNA) and 46 different proteins.

The protein localises to the mitochondrion. Functionally, component of the mitochondrial ribosome (mitoribosome), a dedicated translation machinery responsible for the synthesis of mitochondrial genome-encoded proteins, including at least some of the essential transmembrane subunits of the mitochondrial respiratory chain. The mitoribosomes are attached to the mitochondrial inner membrane and translation products are cotranslationally integrated into the membrane. This is Small ribosomal subunit protein uS2m (MRP4) from Saccharomyces cerevisiae (strain ATCC 204508 / S288c) (Baker's yeast).